A 514-amino-acid polypeptide reads, in one-letter code: Putative ankyrin repeat protein R863 (514 aa).

15 ANK repeats span residues 45–74 (AKIDVIEYIVRNNLTDILKYIVVLKTLKHP), 84–114 (KSLNKLLIDNCEKRRLDIIQYLINIGADINS), 115–144 (KKNRAVRLASERGYLEIVKYLVSQGADVRA), 146–174 (KDYAVVWASRNGHLEVVKYLVSLGANIKV), 176–204 (DNFAVRWASRNGYIDVVKYLTSQDANIRA), 205–234 (DNNYAVRLASENGHIDVVKYLVSLGADIRA), 236–264 (NNYAIRHASRGGHIEVVEYLVSLGANVKS), 266–294 (NDCAVKFASKNGHLGVVKYLASQGADVRS), 295–324 (ENDYAFRMASENGHLEVVVYLVRQGVNVRA), 325–354 (DNNYAVRMASENGYLEIVKFLVSQGANIRS), 356–384 (NDYAIQKASKNGHLEVVEHLVNQGANFKS), 385–414 (DYDCAIKLASENGHLEVVKYLVSQDADIRV), 415–444 (NNDYAIRWASRNGHIEVVKYLVSQGADIRA), 446–474 (NDYAVRMASENGHLEVVKYLVNLGANVKA), and 476–504 (NNYAVGWASRNGHIGVVKYLVSQGADVRS).

This chain is Putative ankyrin repeat protein R863, found in Acanthamoeba polyphaga mimivirus (APMV).